The following is a 557-amino-acid chain: Urease subunit alpha (557 aa).

One can recognise a Urease domain in the interval 130–557; it reads GFIDTHIHWV…LPLTQLYFIY (428 aa). His-135, His-137, and Lys-217 together coordinate Ni(2+). Lys-217 carries the N6-carboxylysine modification. A substrate-binding site is contributed by His-219. His-246 and His-272 together coordinate Ni(2+). His-320 acts as the Proton donor in catalysis. A Ni(2+)-binding site is contributed by Asp-360.

Belongs to the metallo-dependent hydrolases superfamily. Urease alpha subunit family. As to quaternary structure, heterohexamer of 3 UreC (alpha) and 3 UreAB (gamma/beta) subunits. The cofactor is Ni cation. Post-translationally, carboxylation allows a single lysine to coordinate two nickel ions.

It is found in the cytoplasm. The catalysed reaction is urea + 2 H2O + H(+) = hydrogencarbonate + 2 NH4(+). It participates in nitrogen metabolism; urea degradation; CO(2) and NH(3) from urea (urease route): step 1/1. This chain is Urease subunit alpha, found in Sulfurisphaera tokodaii (strain DSM 16993 / JCM 10545 / NBRC 100140 / 7) (Sulfolobus tokodaii).